The primary structure comprises 396 residues: tRNA(Met) cytidine acetate ligase (396 aa).

ATP is bound by residues 9–22 (IVEY…HLHH), glycine 103, asparagine 154, and arginine 179.

The protein belongs to the TmcAL family.

Its subcellular location is the cytoplasm. The catalysed reaction is cytidine(34) in elongator tRNA(Met) + acetate + ATP = N(4)-acetylcytidine(34) in elongator tRNA(Met) + AMP + diphosphate. In terms of biological role, catalyzes the formation of N(4)-acetylcytidine (ac(4)C) at the wobble position of elongator tRNA(Met), using acetate and ATP as substrates. First activates an acetate ion to form acetyladenylate (Ac-AMP) and then transfers the acetyl group to tRNA to form ac(4)C34. The polypeptide is tRNA(Met) cytidine acetate ligase (Fusobacterium nucleatum subsp. nucleatum (strain ATCC 25586 / DSM 15643 / BCRC 10681 / CIP 101130 / JCM 8532 / KCTC 2640 / LMG 13131 / VPI 4355)).